We begin with the raw amino-acid sequence, 349 residues long: D-alanine--D-alanine ligase (349 aa).

The 204-residue stretch at 132-335 folds into the ATP-grasp domain; it reads KHVFEAVGVP…YSDLIEKLVD (204 aa). ATP is bound at residue 162 to 217; sequence VEKLDFPVFVKPANMGSSVGISKVDDLADLQPALSEAYKYDNRVVIEQGVDAREIE. Aspartate 289, glutamate 302, and asparagine 304 together coordinate Mg(2+).

This sequence belongs to the D-alanine--D-alanine ligase family. Mg(2+) is required as a cofactor. The cofactor is Mn(2+).

It localises to the cytoplasm. It catalyses the reaction 2 D-alanine + ATP = D-alanyl-D-alanine + ADP + phosphate + H(+). It participates in cell wall biogenesis; peptidoglycan biosynthesis. Cell wall formation. This Lactococcus lactis subsp. cremoris (strain MG1363) protein is D-alanine--D-alanine ligase.